The following is a 123-amino-acid chain: Small ribosomal subunit protein uS13c (123 aa).

The tract at residues 99–123 (GQRTRSNARTRRGAKKTVAGKKLAK) is disordered. Positions 100 to 123 (QRTRSNARTRRGAKKTVAGKKLAK) are enriched in basic residues.

Belongs to the universal ribosomal protein uS13 family. In terms of assembly, part of the 30S ribosomal subunit.

The protein localises to the plastid. The protein resides in the chloroplast. Located at the top of the head of the 30S subunit, it contacts several helices of the 16S rRNA. In Cyanidioschyzon merolae (strain NIES-3377 / 10D) (Unicellular red alga), this protein is Small ribosomal subunit protein uS13c.